A 340-amino-acid polypeptide reads, in one-letter code: Anthranilate phosphoribosyltransferase (340 aa).

Residues G80, 83-84 (GD), T88, 90-93 (NIST), 108-116 (KHGNRAMSS), and S120 each bind 5-phospho-alpha-D-ribose 1-diphosphate. G80 contacts anthranilate. Residue S92 coordinates Mg(2+). N111 contributes to the anthranilate binding site. R166 lines the anthranilate pocket. Residues D225 and E226 each coordinate Mg(2+).

Belongs to the anthranilate phosphoribosyltransferase family. Homodimer. Mg(2+) serves as cofactor.

It catalyses the reaction N-(5-phospho-beta-D-ribosyl)anthranilate + diphosphate = 5-phospho-alpha-D-ribose 1-diphosphate + anthranilate. Its pathway is amino-acid biosynthesis; L-tryptophan biosynthesis; L-tryptophan from chorismate: step 2/5. Its function is as follows. Catalyzes the transfer of the phosphoribosyl group of 5-phosphorylribose-1-pyrophosphate (PRPP) to anthranilate to yield N-(5'-phosphoribosyl)-anthranilate (PRA). This Chloroflexus aggregans (strain MD-66 / DSM 9485) protein is Anthranilate phosphoribosyltransferase.